A 229-amino-acid polypeptide reads, in one-letter code: Small ribosomal subunit protein uS3 (229 aa).

Residues 39–107 enclose the KH type-2 domain; that stretch reads VRKFLEKKLK…PAQINIAEIR (69 aa).

Belongs to the universal ribosomal protein uS3 family. In terms of assembly, part of the 30S ribosomal subunit. Forms a tight complex with proteins S10 and S14.

Functionally, binds the lower part of the 30S subunit head. Binds mRNA in the 70S ribosome, positioning it for translation. This is Small ribosomal subunit protein uS3 from Shewanella loihica (strain ATCC BAA-1088 / PV-4).